A 605-amino-acid polypeptide reads, in one-letter code: Phosphoenolpyruvate carboxykinase [GTP] (605 aa).

Substrate contacts are provided by residues Arg79 and 218 to 220 (YGG). Residues Lys227 and His247 each contribute to the Mn(2+) site. A substrate-binding site is contributed by Ser269. 270 to 275 (ACGKTN) lines the GTP pocket. Residue Cys271 is part of the active site. Asp294 serves as a coordination point for Mn(2+). Residues 364 to 381 (LTDWKGRDWTPQSDEKAA) show a composition bias toward basic and acidic residues. Residues 364-385 (LTDWKGRDWTPQSDEKAAHPNS) are disordered. 384 to 386 (NSR) contacts substrate. GTP-binding positions include Arg386, Arg417, and 513–516 (FGEN).

It belongs to the phosphoenolpyruvate carboxykinase [GTP] family. As to quaternary structure, monomer. Mn(2+) serves as cofactor.

It is found in the cytoplasm. It carries out the reaction oxaloacetate + GTP = phosphoenolpyruvate + GDP + CO2. It functions in the pathway carbohydrate biosynthesis; gluconeogenesis. In terms of biological role, catalyzes the conversion of oxaloacetate (OAA) to phosphoenolpyruvate (PEP), the rate-limiting step in the metabolic pathway that produces glucose from lactate and other precursors derived from the citric acid cycle. The protein is Phosphoenolpyruvate carboxykinase [GTP] of Saccharopolyspora erythraea (strain ATCC 11635 / DSM 40517 / JCM 4748 / NBRC 13426 / NCIMB 8594 / NRRL 2338).